The sequence spans 374 residues: All-trans-retinol dehydrogenase [NAD(+)] ADH7 (374 aa).

Met1 carries the N-acetylmethionine modification. Zn(2+) contacts are provided by Cys47, His68, Cys98, Cys101, Cys104, Cys112, and Cys174. NAD(+) is bound by residues 199–204, Asp223, Lys228, 292–294, and Arg369; these read GLGGVG and VGA.

This sequence belongs to the zinc-containing alcohol dehydrogenase family. Class-IV subfamily. In terms of assembly, homodimer. The cofactor is Zn(2+). In terms of tissue distribution, preferentially expressed in stomach.

The protein resides in the cytoplasm. It catalyses the reaction a primary alcohol + NAD(+) = an aldehyde + NADH + H(+). It carries out the reaction 10-hydroxydecanoate + NAD(+) = 10-oxodecanoate + NADH + H(+). The catalysed reaction is all-trans-retinol + NAD(+) = all-trans-retinal + NADH + H(+). The enzyme catalyses 9-cis-retinol + NAD(+) = 9-cis-retinal + NADH + H(+). It catalyses the reaction all-trans-3,4-didehydroretinol + NAD(+) = all-trans-3,4-didehydroretinal + NADH + H(+). It carries out the reaction all-trans-4-hydroxyretinol + NAD(+) = all-trans-4-hydroxyretinal + NADH + H(+). The catalysed reaction is all-trans-4-oxoretinol + NAD(+) = all-trans-4-oxoretinal + NADH + H(+). The enzyme catalyses 12-hydroxydodecanoate + NAD(+) = 12-oxododecanoate + NADH + H(+). It catalyses the reaction 16-hydroxyhexadecanoate + NAD(+) = 16-oxohexadecanoate + NADH + H(+). It carries out the reaction hexan-1-ol + NAD(+) = hexanal + NADH + H(+). The catalysed reaction is (E)-hex-2-en-1-ol + NAD(+) = (E)-hex-2-enal + NADH + H(+). The enzyme catalyses (E)-4-hydroxynon-2-en-1-ol + NAD(+) = (E)-4-hydroxynon-2-enal + NADH + H(+). Its activity is regulated as follows. Retinol oxidation is inhibited by the detergent Tween 80. Ethanol inhibits both all-trans-retinol and 9-cis-retinol oxidation. 13-cis-retinol is an effective competitive inhibitor of the 9-cis-retinol oxidation. All-trans-retinoic acid is a powerful inhibitor of all-trans-retinol oxidation. 13-cis-retinoic acid is a powerful inhibitor of all-trans-retinol oxidation. Cimetidine and ranitidine inhibited ethanol oxidation. Catalyzes the NAD-dependent oxidation of all-trans-retinol, alcohol, aldehyde and omega-hydroxy fatty acids and their derivatives. Oxidizes preferentially all trans-retinol, all-trans-4-hydroxyretinol, 9-cis-retinol, 2-hexenol, and long chain omega-hydroxy fatty acids such as juniperic acid. In vitro can also catalyze the NADH-dependent reduction of all-trans-retinal and aldehydes and their derivatives. Reduces preferentially all trans-retinal, all-trans-4-oxoretinal and hexanal. Catalyzes in the oxidative direction with higher efficiency. Therefore may participate in retinoid metabolism, fatty acid omega-oxidation, and elimination of cytotoxic aldehydes produced by lipid peroxidation. This Rattus norvegicus (Rat) protein is All-trans-retinol dehydrogenase [NAD(+)] ADH7 (Adh7).